A 188-amino-acid chain; its full sequence is Threonylcarbamoyl-AMP synthase (188 aa).

Positions 4–188 (VENLQQAVDA…ARSLQVLRQG (185 aa)) constitute a YrdC-like domain.

It belongs to the SUA5 family. TsaC subfamily.

The protein resides in the cytoplasm. The catalysed reaction is L-threonine + hydrogencarbonate + ATP = L-threonylcarbamoyladenylate + diphosphate + H2O. Required for the formation of a threonylcarbamoyl group on adenosine at position 37 (t(6)A37) in tRNAs that read codons beginning with adenine. Catalyzes the conversion of L-threonine, HCO(3)(-)/CO(2) and ATP to give threonylcarbamoyl-AMP (TC-AMP) as the acyladenylate intermediate, with the release of diphosphate. The polypeptide is Threonylcarbamoyl-AMP synthase (Vibrio cholerae serotype O1 (strain ATCC 39541 / Classical Ogawa 395 / O395)).